The sequence spans 435 residues: 5-methylthioadenosine/S-adenosylhomocysteine deaminase (435 aa).

Zn(2+)-binding residues include H65 and H67. Substrate is bound by residues E94, R150, and H189. H216 is a Zn(2+) binding site. Positions 219 and 304 each coordinate substrate. D304 is a binding site for Zn(2+).

This sequence belongs to the metallo-dependent hydrolases superfamily. MTA/SAH deaminase family. Zn(2+) is required as a cofactor.

The enzyme catalyses S-adenosyl-L-homocysteine + H2O + H(+) = S-inosyl-L-homocysteine + NH4(+). The catalysed reaction is S-methyl-5'-thioadenosine + H2O + H(+) = S-methyl-5'-thioinosine + NH4(+). Its function is as follows. Catalyzes the deamination of 5-methylthioadenosine and S-adenosyl-L-homocysteine into 5-methylthioinosine and S-inosyl-L-homocysteine, respectively. Is also able to deaminate adenosine. This Bacillus anthracis (strain A0248) protein is 5-methylthioadenosine/S-adenosylhomocysteine deaminase.